Consider the following 190-residue polypeptide: Somatotropin (190 aa).

H19 is a Zn(2+) binding site. The cysteines at positions 52 and 163 are disulfide-linked. S105 carries the post-translational modification Phosphoserine. E172 contacts Zn(2+). Cysteines 180 and 188 form a disulfide.

This sequence belongs to the somatotropin/prolactin family.

The protein localises to the secreted. Its function is as follows. Plays an important role in growth control. Its major role in stimulating body growth is to stimulate the liver and other tissues to secrete IGF1. It stimulates both the differentiation and proliferation of myoblasts. It also stimulates amino acid uptake and protein synthesis in muscle and other tissues. The protein is Somatotropin (GH1) of Balaenoptera borealis (Sei whale).